Consider the following 261-residue polypeptide: 3-hydroxyacyl-CoA dehydrogenase type-2 (261 aa).

Alanine 2 carries the post-translational modification N-acetylalanine. Positions 20, 22, and 41 each coordinate NAD(+). Position 53 is an N6-acetyllysine; alternate (lysine 53). An N6-succinyllysine; alternate modification is found at lysine 53. The NAD(+) site is built by aspartate 64 and valine 65. The residue at position 69 (lysine 69) is an N6-acetyllysine. Residue cysteine 91 coordinates NAD(+). An N6-acetyllysine mark is found at lysine 99 and lysine 105. Serine 155 is a binding site for substrate. The NAD(+) site is built by tyrosine 168, lysine 172, phenylalanine 201, and threonine 203. The active-site Proton acceptor is tyrosine 168. Lysine 212 is subject to N6-acetyllysine; alternate. An N6-succinyllysine; alternate modification is found at lysine 212.

This sequence belongs to the short-chain dehydrogenases/reductases (SDR) family. Homotetramer. Component of mitochondrial ribonuclease P, a complex composed of TRMT10C/MRPP1, HSD17B10/MRPP2 and PRORP/MRPP3. Interacts with TRMT10C/MRPP1; forming the MRPP1-MRPP2 subcomplex of the mitochondrial ribonuclease P complex.

The protein localises to the mitochondrion. It is found in the mitochondrion matrix. It localises to the mitochondrion nucleoid. The catalysed reaction is a (3S)-3-hydroxyacyl-CoA + NAD(+) = a 3-oxoacyl-CoA + NADH + H(+). It catalyses the reaction (2S,3S)-3-hydroxy-2-methylbutanoyl-CoA + NAD(+) = 2-methyl-3-oxobutanoyl-CoA + NADH + H(+). The enzyme catalyses testosterone + NAD(+) = androst-4-ene-3,17-dione + NADH + H(+). It carries out the reaction 5alpha-androstane-3alpha,17beta-diol + NAD(+) = 17beta-hydroxy-5alpha-androstan-3-one + NADH + H(+). The catalysed reaction is 17beta-estradiol + NAD(+) = estrone + NADH + H(+). It catalyses the reaction cholate + NAD(+) = 3alpha,12alpha-dihydroxy-7-oxo-5beta-cholanate + NADH + H(+). The enzyme catalyses (3S)-3-hydroxybutanoyl-CoA + NAD(+) = acetoacetyl-CoA + NADH + H(+). It carries out the reaction (3S)-hydroxyoctanoyl-CoA + NAD(+) = 3-oxooctanoyl-CoA + NADH + H(+). The catalysed reaction is (3S)-hydroxyhexadecanoyl-CoA + NAD(+) = 3-oxohexadecanoyl-CoA + NADH + H(+). It catalyses the reaction 17beta-hydroxy-5alpha-androstan-3-one + NAD(+) = 5alpha-androstan-3,17-dione + NADH + H(+). The enzyme catalyses 5alpha-pregnan-20beta-ol-3-one + NAD(+) = 5alpha-pregnane-3,20-dione + NADH + H(+). It carries out the reaction 3alpha-hydroxy-5alpha-pregnan-20-one + NAD(+) = 5alpha-pregnane-3,20-dione + NADH + H(+). The catalysed reaction is cortisone + NAD(+) = 17alpha-hydroxypregn-4-en-3,11,20-trione-21-al + NADH + H(+). It catalyses the reaction 11-dehydrocorticosterone + NAD(+) = pregn-4-ene-3,11,20,21-tetraone + NADH + H(+). The enzyme catalyses cortisol + NAD(+) = 11beta,17alpha-dihydroxypregn-4-ene-3,20,21-trione + NADH + H(+). It carries out the reaction chenodeoxycholate + NAD(+) = 7-oxolithocholate + NADH + H(+). The catalysed reaction is ursodeoxycholate + NAD(+) = 7-oxolithocholate + NADH + H(+). It catalyses the reaction 3beta,7beta-dihydroxy-5beta-cholan-24-oate + NAD(+) = 3beta-hydroxy-7-oxo-5beta-cholan-24-oate + NADH + H(+). It functions in the pathway amino-acid degradation; L-isoleucine degradation. It participates in lipid metabolism; fatty acid beta-oxidation. The protein operates within steroid metabolism. Its pathway is lipid metabolism; bile acid biosynthesis. In terms of biological role, mitochondrial dehydrogenase involved in pathways of fatty acid, branched-chain amino acid and steroid metabolism. Acts as (S)-3-hydroxyacyl-CoA dehydrogenase in mitochondrial fatty acid beta-oxidation, a major degradation pathway of fatty acids. Catalyzes the third step in the beta-oxidation cycle, namely the reversible conversion of (S)-3-hydroxyacyl-CoA to 3-ketoacyl-CoA. Preferentially accepts straight medium- and short-chain acyl-CoA substrates with highest efficiency for (3S)-hydroxybutanoyl-CoA. Acts as 3-hydroxy-2-methylbutyryl-CoA dehydrogenase in branched-chain amino acid catabolic pathway. Catalyzes the oxidation of 3-hydroxy-2-methylbutanoyl-CoA into 2-methyl-3-oxobutanoyl-CoA, a step in isoleucine degradation pathway. Has hydroxysteroid dehydrogenase activity toward steroid hormones and bile acids. Catalyzes the oxidation of 3alpha-, 17beta-, 20beta- and 21-hydroxysteroids and 7alpha- and 7beta-hydroxy bile acids. Oxidizes allopregnanolone/brexanolone at the 3alpha-hydroxyl group, which is known to be critical for the activation of gamma-aminobutyric acid receptors (GABAARs) chloride channel. Has phospholipase C-like activity toward cardiolipin and its oxidized species. Likely oxidizes the 2'-hydroxyl in the head group of cardiolipin to form a ketone intermediate that undergoes nucleophilic attack by water and fragments into diacylglycerol, dihydroxyacetone and orthophosphate. Has higher affinity for cardiolipin with oxidized fatty acids and may degrade these species during the oxidative stress response to protect cells from apoptosis. By interacting with intracellular amyloid-beta, it may contribute to the neuronal dysfunction associated with Alzheimer disease (AD). Essential for structural and functional integrity of mitochondria. In addition to mitochondrial dehydrogenase activity, moonlights as a component of mitochondrial ribonuclease P, a complex that cleaves tRNA molecules in their 5'-ends. Together with TRMT10C/MRPP1, forms a subcomplex of the mitochondrial ribonuclease P, named MRPP1-MRPP2 subcomplex, which displays functions that are independent of the ribonuclease P activity. The MRPP1-MRPP2 subcomplex catalyzes the formation of N(1)-methylguanine and N(1)-methyladenine at position 9 (m1G9 and m1A9, respectively) in tRNAs; HSD17B10/MRPP2 acting as a non-catalytic subunit. The MRPP1-MRPP2 subcomplex also acts as a tRNA maturation platform: following 5'-end cleavage by the mitochondrial ribonuclease P complex, the MRPP1-MRPP2 subcomplex enhances the efficiency of 3'-processing catalyzed by ELAC2, retains the tRNA product after ELAC2 processing and presents the nascent tRNA to the mitochondrial CCA tRNA nucleotidyltransferase TRNT1 enzyme. Associates with mitochondrial DNA complexes at the nucleoids to initiate RNA processing and ribosome assembly. The sequence is that of 3-hydroxyacyl-CoA dehydrogenase type-2 (HSD17B10) from Bos taurus (Bovine).